Here is a 136-residue protein sequence, read N- to C-terminus: Large ribosomal subunit protein bL17 (136 aa).

It belongs to the bacterial ribosomal protein bL17 family. Part of the 50S ribosomal subunit. Contacts protein L32.

This Rickettsia africae (strain ESF-5) protein is Large ribosomal subunit protein bL17.